Reading from the N-terminus, the 305-residue chain is Dihydroorotate dehydrogenase B (NAD(+)), catalytic subunit (305 aa).

Residues S23 and 47–48 contribute to the FMN site; that span reads KG. Substrate-binding positions include K47 and 71-75; that span reads NAIGL. FMN is bound by residues N101 and N129. Position 129 (N129) interacts with substrate. The active-site Nucleophile is C132. The FMN site is built by K167 and I193. 194 to 195 contacts substrate; the sequence is NT. Residues G219, 245 to 246, and 267 to 268 contribute to the FMN site; these read GG and GT.

The protein belongs to the dihydroorotate dehydrogenase family. Type 1 subfamily. Heterotetramer of 2 PyrK and 2 PyrD type B subunits. The cofactor is FMN.

The protein resides in the cytoplasm. The enzyme catalyses (S)-dihydroorotate + NAD(+) = orotate + NADH + H(+). The protein operates within pyrimidine metabolism; UMP biosynthesis via de novo pathway; orotate from (S)-dihydroorotate (NAD(+) route): step 1/1. In terms of biological role, catalyzes the conversion of dihydroorotate to orotate with NAD(+) as electron acceptor. The protein is Dihydroorotate dehydrogenase B (NAD(+)), catalytic subunit (pyrD) of Geobacter metallireducens (strain ATCC 53774 / DSM 7210 / GS-15).